The chain runs to 674 residues: MFTEKGIFPIGDGLLDVDADRLKGLLVSCPDINEIYEVEQTPFARGKFAAVRRAIHKNTGSHFAAKFLKRRRRAQSSDKEIKHEIAVLMLCEGEDNIVNLNAVHETRSDTALLLELATGGELQTILDNEECLTEAQARHCMREVLKALKFLHDRSIAHLDLKPQNILLAGERIEDGLKLCDFGISRVVCEGINVREMAGTPDYVAPEVLQYEPLSLLTDIWSVGVLTYVLLSGFSPFGGDTKQETFLNISQCALTFPDNLFGGVSPVAIDFIRRALRIKPNDRMNATGCLDHIWLKDDCSLDRQIYLQPQSDAEEEEEEDVDDDVEDEEEEEQVEEEEEETQNVEEPTTEAPQQQQQPVQQHQLAKSGQIHSKPTHNGHHRANSGGSISKIPIATSKLQSTPSSETTTAIHTLTSNSNGHVHKPTQIVTPTRRASDSDKENTYTATFVKKPVATIQLGSSNGIEDATVVATLTLFPDAPTTPKVIRKTPTGESNGSATSVKALVKKFQLEDSSGSAVARRSGGAVTSSSGLHSPTTTSVRLNSIRRASEPLTTVYKKQTSQNGCSSTSNPSSSPGSSPTTSGSTATLLIHSQRLGNSTAPASHCVAVPATATATSSASSSNSSSGKSTSAAHHLHHHHMHHHHHHHHHHVVIAAKNAAAVAATNNLSLDQGIIC.

One can recognise a Protein kinase domain in the interval 37-295 (EVEQTPFARG…ATGCLDHIWL (259 aa)). ATP contacts are provided by residues 43–51 (FARGKFAAV) and Lys-66. The active-site Proton acceptor is Asp-160. Disordered stretches follow at residues 308 to 388 (QPQS…GGSI), 412 to 440 (TLTS…SDKE), 511 to 583 (DSSG…TSGS), and 614 to 650 (TSSA…HHHV). The segment covering 312–343 (DAEEEEEEDVDDDVEDEEEEEQVEEEEEETQN) has biased composition (acidic residues). A compositionally biased stretch (low complexity) spans 352–363 (PQQQQQPVQQHQ). Over residues 373–382 (KPTHNGHHRA) the composition is skewed to basic residues. A phosphoserine mark is found at Ser-384, Ser-387, Ser-435, Ser-437, and Ser-521. Low complexity predominate over residues 512-525 (SSGSAVARRSGGAV). Polar residues-rich tracts occupy residues 526–541 (TSSS…SVRL) and 555–564 (YKKQTSQNGC). Low complexity-rich tracts occupy residues 565 to 583 (SSTS…TSGS) and 614 to 631 (TSSA…TSAA). The segment covering 632–650 (HHLHHHHMHHHHHHHHHHV) has biased composition (basic residues).

This sequence belongs to the protein kinase superfamily. Ser/Thr protein kinase family.

The catalysed reaction is L-seryl-[protein] + ATP = O-phospho-L-seryl-[protein] + ADP + H(+). It catalyses the reaction L-threonyl-[protein] + ATP = O-phospho-L-threonyl-[protein] + ADP + H(+). This is Death-associated protein kinase related (Drak) from Drosophila melanogaster (Fruit fly).